The primary structure comprises 450 residues: Tryptophan dimethylallyltransferase 2 (450 aa).

Residues 80-81 and glutamate 89 each bind L-tryptophan; that span reads IL. Substrate is bound by residues arginine 100, lysine 186, and tyrosine 188. L-tryptophan-binding residues include tyrosine 190 and arginine 251. Residues arginine 264, lysine 266, tyrosine 268, glutamine 350, tyrosine 352, tyrosine 416, and tyrosine 420 each contribute to the substrate site.

The protein belongs to the tryptophan dimethylallyltransferase family. Homodimer.

It catalyses the reaction L-tryptophan + dimethylallyl diphosphate = 4-(3-methylbut-2-enyl)-L-tryptophan + diphosphate. It participates in alkaloid biosynthesis; ergot alkaloid biosynthesis. In terms of biological role, catalyzes the first step of ergot alkaloid biosynthesis. Ergot alkaloids, which are produced by endophyte fungi, can enhance plant host fitness, but also cause livestock toxicosis to host plants. The sequence is that of Tryptophan dimethylallyltransferase 2 (dmaW2) from Epichloe coenophiala (Tall fescue endophyte fungus).